Consider the following 353-residue polypeptide: Photosystem II D2 protein (353 aa).

An N-acetylthreonine modification is found at Thr-2. Thr-2 carries the phosphothreonine modification. A helical membrane pass occupies residues 41–61; the sequence is CAYFALGGWFTGTTFVTSWYT. His-118 contacts chlorophyll a. Residues 125–141 traverse the membrane as a helical segment; the sequence is GFMLRQFELARSVQLRP. Pheophytin a-binding residues include Gln-130 and Asn-143. A helical membrane pass occupies residues 153-166; it reads VFVSVFLIYPLGQS. Residue His-198 coordinates chlorophyll a. A helical transmembrane segment spans residues 208-228; the sequence is AALLCAIHGATVENTLFEDGD. The a plastoquinone site is built by His-215 and Phe-262. Fe cation is bound at residue His-215. His-269 contacts Fe cation. Residues 279–295 form a helical membrane-spanning segment; the sequence is GLWMSAIGVVGLALNLR.

It belongs to the reaction center PufL/M/PsbA/D family. In terms of assembly, PSII is composed of 1 copy each of membrane proteins PsbA, PsbB, PsbC, PsbD, PsbE, PsbF, PsbH, PsbI, PsbJ, PsbK, PsbL, PsbM, PsbT, PsbX, PsbY, PsbZ, Psb30/Ycf12, at least 3 peripheral proteins of the oxygen-evolving complex and a large number of cofactors. It forms dimeric complexes. It depends on The D1/D2 heterodimer binds P680, chlorophylls that are the primary electron donor of PSII, and subsequent electron acceptors. It shares a non-heme iron and each subunit binds pheophytin, quinone, additional chlorophylls, carotenoids and lipids. There is also a Cl(-1) ion associated with D1 and D2, which is required for oxygen evolution. The PSII complex binds additional chlorophylls, carotenoids and specific lipids. as a cofactor.

The protein resides in the plastid. It is found in the chloroplast thylakoid membrane. It catalyses the reaction 2 a plastoquinone + 4 hnu + 2 H2O = 2 a plastoquinol + O2. Its function is as follows. Photosystem II (PSII) is a light-driven water:plastoquinone oxidoreductase that uses light energy to abstract electrons from H(2)O, generating O(2) and a proton gradient subsequently used for ATP formation. It consists of a core antenna complex that captures photons, and an electron transfer chain that converts photonic excitation into a charge separation. The D1/D2 (PsbA/PsbD) reaction center heterodimer binds P680, the primary electron donor of PSII as well as several subsequent electron acceptors. D2 is needed for assembly of a stable PSII complex. The sequence is that of Photosystem II D2 protein from Pinus thunbergii (Japanese black pine).